We begin with the raw amino-acid sequence, 213 residues long: Leucyl/phenylalanyl-tRNA--protein transferase (213 aa).

This sequence belongs to the L/F-transferase family.

The protein localises to the cytoplasm. It catalyses the reaction N-terminal L-lysyl-[protein] + L-leucyl-tRNA(Leu) = N-terminal L-leucyl-L-lysyl-[protein] + tRNA(Leu) + H(+). It carries out the reaction N-terminal L-arginyl-[protein] + L-leucyl-tRNA(Leu) = N-terminal L-leucyl-L-arginyl-[protein] + tRNA(Leu) + H(+). The catalysed reaction is L-phenylalanyl-tRNA(Phe) + an N-terminal L-alpha-aminoacyl-[protein] = an N-terminal L-phenylalanyl-L-alpha-aminoacyl-[protein] + tRNA(Phe). Functionally, functions in the N-end rule pathway of protein degradation where it conjugates Leu, Phe and, less efficiently, Met from aminoacyl-tRNAs to the N-termini of proteins containing an N-terminal arginine or lysine. This chain is Leucyl/phenylalanyl-tRNA--protein transferase, found in Campylobacter lari (strain RM2100 / D67 / ATCC BAA-1060).